Consider the following 275-residue polypeptide: Tryptophan synthase alpha chain (275 aa).

Residues Glu49 and Asp60 each act as proton acceptor in the active site.

Belongs to the TrpA family. As to quaternary structure, tetramer of two alpha and two beta chains.

The enzyme catalyses (1S,2R)-1-C-(indol-3-yl)glycerol 3-phosphate + L-serine = D-glyceraldehyde 3-phosphate + L-tryptophan + H2O. It participates in amino-acid biosynthesis; L-tryptophan biosynthesis; L-tryptophan from chorismate: step 5/5. Functionally, the alpha subunit is responsible for the aldol cleavage of indoleglycerol phosphate to indole and glyceraldehyde 3-phosphate. This chain is Tryptophan synthase alpha chain, found in Psychrobacter sp. (strain PRwf-1).